Consider the following 181-residue polypeptide: Oligoribonuclease (181 aa).

Residues 8–171 (LIWIDLEMTG…DDIRESVAEL (164 aa)) form the Exonuclease domain. Tyr129 is an active-site residue.

The protein belongs to the oligoribonuclease family.

The protein resides in the cytoplasm. 3'-to-5' exoribonuclease specific for small oligoribonucleotides. The polypeptide is Oligoribonuclease (Sodalis glossinidius (strain morsitans)).